We begin with the raw amino-acid sequence, 188 residues long: MATVGMNDVKNGMKILVNNEPAVITETEYVKPGKGQAFTRMKYRFIKSGRVVEMTMKATDDVEVADVVDTDMRYLYTDGEYWHFMDPESFEQVQADKAGMGGAEKWLKGEEDCIVTLWNGAPIWVQPPNFVELKITETDPGVRGDTSGGGGKPATLETGAVVRVPLFVNQDEVIKVDTRSGEYSARVK.

Lysine 34 carries the N6-(3,6-diaminohexanoyl)-5-hydroxylysine modification.

The protein belongs to the elongation factor P family. Post-translationally, may be beta-lysylated on the epsilon-amino group of Lys-34 by the combined action of EpmA and EpmB, and then hydroxylated on the C5 position of the same residue by EpmC (if this protein is present). Lysylation is critical for the stimulatory effect of EF-P on peptide-bond formation. The lysylation moiety may extend toward the peptidyltransferase center and stabilize the terminal 3-CCA end of the tRNA. Hydroxylation of the C5 position on Lys-34 may allow additional potential stabilizing hydrogen-bond interactions with the P-tRNA.

Its subcellular location is the cytoplasm. It functions in the pathway protein biosynthesis; polypeptide chain elongation. In terms of biological role, involved in peptide bond synthesis. Alleviates ribosome stalling that occurs when 3 or more consecutive Pro residues or the sequence PPG is present in a protein, possibly by augmenting the peptidyl transferase activity of the ribosome. Modification of Lys-34 is required for alleviation. In Xanthomonas campestris pv. campestris (strain B100), this protein is Elongation factor P.